Here is a 48-residue protein sequence, read N- to C-terminus: Large ribosomal subunit protein eL40 (48 aa).

This sequence belongs to the eukaryotic ribosomal protein eL40 family.

This chain is Large ribosomal subunit protein eL40, found in Methanocella arvoryzae (strain DSM 22066 / NBRC 105507 / MRE50).